We begin with the raw amino-acid sequence, 307 residues long: Transcription initiation factor IIB (307 aa).

The TFIIB-type zinc-finger motif lies at 11–42 (FTEECPACGSAEIVFDEERGEYVCANCGLVTE). Positions 15, 18, 34, and 37 each coordinate Zn(2+). The tract at residues 48 to 69 (PGPEWRHFNPDQRQRRSRTGEP) is disordered. A compositionally biased stretch (basic and acidic residues) spans 50–69 (PEWRHFNPDQRQRRSRTGEP). A run of 2 repeats spans residues 123–207 (LELE…QRRL) and 218–299 (DHLP…EICE).

Belongs to the TFIIB family.

Stabilizes TBP binding to an archaeal box-A promoter. Also responsible for recruiting RNA polymerase II to the pre-initiation complex (DNA-TBP-TFIIB). The sequence is that of Transcription initiation factor IIB from Methanopyrus kandleri (strain AV19 / DSM 6324 / JCM 9639 / NBRC 100938).